The following is a 427-amino-acid chain: Trigger factor (427 aa).

Residues 163 to 248 (GDTVVIDFVG…IHEVKTKEVP (86 aa)) form the PPIase FKBP-type domain.

Belongs to the FKBP-type PPIase family. Tig subfamily.

The protein localises to the cytoplasm. The enzyme catalyses [protein]-peptidylproline (omega=180) = [protein]-peptidylproline (omega=0). Functionally, involved in protein export. Acts as a chaperone by maintaining the newly synthesized protein in an open conformation. Functions as a peptidyl-prolyl cis-trans isomerase. The sequence is that of Trigger factor from Streptococcus agalactiae serotype III (strain NEM316).